The primary structure comprises 700 residues: MRQNNLFSLIFWLVPVSLIIVVSAQLCSEKFGTFTPGGTFDKNRRIILSSLPSEVTAQDGFYNASIGTDPDQLYAMGMCIPGAKQKLCRDCIMDVTRQLIQTCPNQTAAIHWSGGGKTVCMARYYNQPSSRPLDLESVSIGYNVGNLSTNLTDFDRLWERLIAHMVTKASSASIKYLSFDNSRFYAADETNLTNSQMVYALMQCTPDVSPSNCNTCLKQSVDDYVGCCHGKQGGYVYRPSCIFRWDLYPFNGAFDLLTLAPPPSSQLQSPPPVTNKDEKTIHTGTIIGIVIVVAMVIIMALLALGVSVCRSRKKYQAFASETADDITTVGYLQFDIKDIEAATSNFLASNKIGQGGFGEVYKGTLSNGTEVAVKRLSRTSDQGELEFKNEVLLVAKLQHRNLVRLLGFALQGEEKILVFEFVPNKSLDYFLFGSTNPTKKGQLDWTRRYNIIGGITRGLLYLHQDSRLTIIHRDIKASNILLDADMNPKIADFGMARNFRDHQTEDSTGRVVGTFGYMPPEYVAHGQFSTKSDVYSFGVLILEIVSGRKNSSFYQMDGSVCNLVTYVWRLWNTDSSLELVDPAISGSYEKDEVTRCIHIGLLCVQENPVNRPALSTIFQMLTNSSITLNVPQPPGFFFRNRPESDTLRRGLEPDQYNNESVTCSIDNATITTLLGKTLASALCCITSTLFSKSMYRNTED.

The first 24 residues, 1 to 24 (MRQNNLFSLIFWLVPVSLIIVVSA), serve as a signal peptide directing secretion. Gnk2-homologous domains are found at residues 25–129 (QLCS…NQPS) and 135–250 (LESV…LYPF). Over 25–285 (QLCSEKFGTF…KDEKTIHTGT (261 aa)) the chain is Extracellular. Asn-63, Asn-105, Asn-146, Asn-150, and Asn-191 each carry an N-linked (GlcNAc...) asparagine glycan. The chain crosses the membrane as a helical span at residues 286 to 306 (IIGIVIVVAMVIIMALLALGV). Residues 307–700 (SVCRSRKKYQ…SKSMYRNTED (394 aa)) are Cytoplasmic-facing. Residues 346 to 626 (FLASNKIGQG…IFQMLTNSSI (281 aa)) enclose the Protein kinase domain. Residues 352–360 (IGQGGFGEV) and Lys-374 contribute to the ATP site. Asp-474 acts as the Proton acceptor in catalysis. The residue at position 478 (Ser-478) is a Phosphoserine. Thr-514 bears the Phosphothreonine mark. Tyr-522 bears the Phosphotyrosine mark.

Belongs to the protein kinase superfamily. Ser/Thr protein kinase family. CRK subfamily.

The protein resides in the membrane. It catalyses the reaction L-seryl-[protein] + ATP = O-phospho-L-seryl-[protein] + ADP + H(+). It carries out the reaction L-threonyl-[protein] + ATP = O-phospho-L-threonyl-[protein] + ADP + H(+). In Arabidopsis thaliana (Mouse-ear cress), this protein is Putative cysteine-rich receptor-like protein kinase 30 (CRK30).